The primary structure comprises 211 residues: Large ribosomal subunit protein eL13 (211 aa).

Lys16 is modified (N6-acetyllysine). Phosphoserine occurs at positions 77 and 106. Residues Lys123 and Lys145 each participate in a glycyl lysine isopeptide (Lys-Gly) (interchain with G-Cter in SUMO2) cross-link. Residue Lys174 forms a Glycyl lysine isopeptide (Lys-Gly) (interchain with G-Cter in SUMO1); alternate linkage. Glycyl lysine isopeptide (Lys-Gly) (interchain with G-Cter in SUMO2); alternate cross-links involve residues Lys174 and Lys177. Lys177 carries the post-translational modification N6-acetyllysine; alternate.

Belongs to the eukaryotic ribosomal protein eL13 family. As to quaternary structure, component of the 60S large ribosomal subunit (LSU).

It localises to the cytoplasm. Functionally, component of the ribosome, a large ribonucleoprotein complex responsible for the synthesis of proteins in the cell. The small ribosomal subunit (SSU) binds messenger RNAs (mRNAs) and translates the encoded message by selecting cognate aminoacyl-transfer RNA (tRNA) molecules. The large subunit (LSU) contains the ribosomal catalytic site termed the peptidyl transferase center (PTC), which catalyzes the formation of peptide bonds, thereby polymerizing the amino acids delivered by tRNAs into a polypeptide chain. The nascent polypeptides leave the ribosome through a tunnel in the LSU and interact with protein factors that function in enzymatic processing, targeting, and the membrane insertion of nascent chains at the exit of the ribosomal tunnel. As part of the LSU, it is probably required for its formation and the maturation of rRNAs. Plays a role in bone development. This is Large ribosomal subunit protein eL13 (RPL13) from Oryctolagus cuniculus (Rabbit).